A 620-amino-acid polypeptide reads, in one-letter code: Probable potassium transport system protein Kup 2 (620 aa).

The next 12 helical transmembrane spans lie at 10–30 (LLVS…LYAL), 50–70 (VLSL…VIVI), 102–122 (MMLG…TPAI), 136–156 (PDLR…LFAI), 168–188 (FGPV…VNVI), 211–231 (LMSF…EALY), 246–266 (WFCL…ALLI), 284–304 (MVVP…QAVI), 336–356 (IYVP…VVGF), 368–388 (IAVT…MALL), 393–413 (MALV…FFSA), and 415–435 (IIKV…SFTV).

This sequence belongs to the HAK/KUP transporter (TC 2.A.72) family.

The protein localises to the cell inner membrane. The catalysed reaction is K(+)(in) + H(+)(in) = K(+)(out) + H(+)(out). Transport of potassium into the cell. Likely operates as a K(+):H(+) symporter. This chain is Probable potassium transport system protein Kup 2, found in Rhodopseudomonas palustris (strain BisB5).